Consider the following 209-residue polypeptide: MRDPIETVMNLVPMVVEQTNRGERAYDIFSRLLKERIIFVNGPVEDGMSMLVCAQLLFLEAENPKKEINMYINSPGGVVTSGMAIYDTMQFIRPPVSTLCMGQAASMGSLLLTAGATGHRYALLNARIMVHQPSGGFQGQASDIERHAQDIIKMKRRLNEIYVKHTGRDYDTIERTLDRDHFMTAQEALEFGLIDKVVEARDVSADESK.

S106 (nucleophile) is an active-site residue. The active site involves H131.

Belongs to the peptidase S14 family. As to quaternary structure, fourteen ClpP subunits assemble into 2 heptameric rings which stack back to back to give a disk-like structure with a central cavity, resembling the structure of eukaryotic proteasomes.

The protein localises to the cytoplasm. It catalyses the reaction Hydrolysis of proteins to small peptides in the presence of ATP and magnesium. alpha-casein is the usual test substrate. In the absence of ATP, only oligopeptides shorter than five residues are hydrolyzed (such as succinyl-Leu-Tyr-|-NHMec, and Leu-Tyr-Leu-|-Tyr-Trp, in which cleavage of the -Tyr-|-Leu- and -Tyr-|-Trp bonds also occurs).. Functionally, cleaves peptides in various proteins in a process that requires ATP hydrolysis. Has a chymotrypsin-like activity. Plays a major role in the degradation of misfolded proteins. This chain is ATP-dependent Clp protease proteolytic subunit, found in Brucella melitensis biotype 2 (strain ATCC 23457).